An 864-amino-acid chain; its full sequence is Xylosyltransferase 2 (864 aa).

Over 1–15 the chain is Cytoplasmic; sequence MVASARVQKLVRRYK. The helical; Signal-anchor for type II membrane protein transmembrane segment at 16 to 36 threads the bilayer; sequence LAIATALAILLLQGLVVWSFS. Topologically, residues 37–864 are lumenal; sequence GLEEDEPGEK…GPVKADGRLR (828 aa). Disordered stretches follow at residues 39-123 and 136-158; these read EEDE…RQNL and AGFP…DNSF. Basic and acidic residues predominate over residues 53 to 65; it reads RPLDPGEGSKDTD. A compositionally biased stretch (basic residues) spans 73 to 82; it reads SAGRRHGRWR. Residue asparagine 122 is glycosylated (N-linked (GlcNAc...) asparagine). Disulfide bonds link cysteine 162-cysteine 190, cysteine 206-cysteine 448, cysteine 467-cysteine 480, and cysteine 469-cysteine 478. UDP-alpha-D-xylose is bound by residues valine 239, aspartate 267, and 296–298; that span reads TIW. N-linked (GlcNAc...) asparagine glycosylation occurs at asparagine 327. 400–401 contributes to the UDP-alpha-D-xylose binding site; it reads DW. UDP-alpha-D-xylose-binding positions include serine 481 and 504-505; that span reads RK. 2 disulfides stabilise this stretch: cysteine 580–cysteine 832 and cysteine 825–cysteine 838. Residue asparagine 682 is glycosylated (N-linked (GlcNAc...) asparagine).

This sequence belongs to the glycosyltransferase 14 family. XylT subfamily. As to quaternary structure, monomer. The cofactor is Mg(2+). Requires Mn(2+) as cofactor. Contains disulfide bonds.

Its subcellular location is the golgi apparatus membrane. The protein resides in the secreted. The catalysed reaction is UDP-alpha-D-xylose + L-seryl-[protein] = 3-O-(beta-D-xylosyl)-L-seryl-[protein] + UDP + H(+). It functions in the pathway glycan metabolism; chondroitin sulfate biosynthesis. Its pathway is glycan metabolism; heparan sulfate biosynthesis. Its function is as follows. Catalyzes the first step in the biosynthesis of chondroitin sulfate, heparan sulfate and dermatan sulfate proteoglycans, such as DCN. Transfers D-xylose from UDP-D-xylose to specific serine residues of the core protein. In Rattus norvegicus (Rat), this protein is Xylosyltransferase 2 (Xylt2).